Reading from the N-terminus, the 160-residue chain is MTVKYIRGDLFTHSAPTGKSIVLAHACNTGGSWGGGIAAVFARKYPKANRQYSEYCHKNSHLLGTSLLLKADDYDKSKAYIACLFTSDFNQSPEQIVKYTDQSLQELAKQLKSLPIETQNGNQVVNMPKINSGIFGVPWENTEAVLDKLDSLDFNVYVID.

Residues 1-160 (MTVKYIRGDL…SLDFNVYVID (160 aa)) form the Macro domain. Substrate is bound by residues 8 to 10 (GDL), 26 to 28 (ACN), 33 to 38 (WGGGIA), and 130 to 136 (INSGIFG).

It belongs to the POA1 family.

The enzyme catalyses ADP-alpha-D-ribose 1''-phosphate + H2O = ADP-D-ribose + phosphate. In terms of biological role, highly specific phosphatase involved in the metabolism of ADP-ribose 1''-phosphate (Appr1p) which is produced as a consequence of tRNA splicing. Removes ADP-ribose from glutamate residues in proteins bearing a single ADP-ribose moiety. Inactive towards proteins bearing poly-ADP-ribose. In Lodderomyces elongisporus (strain ATCC 11503 / CBS 2605 / JCM 1781 / NBRC 1676 / NRRL YB-4239) (Yeast), this protein is ADP-ribose 1''-phosphate phosphatase (POA1).